The primary structure comprises 411 residues: Serpin A3-5 (411 aa).

An N-terminal signal peptide occupies residues 1–24 (MRAERTSFLLALGLLMAGIRSVHC). N-linked (GlcNAc...) asparagine glycans are attached at residues asparagine 100, asparagine 180, asparagine 230, asparagine 264, and asparagine 318.

Belongs to the serpin family. In terms of assembly, homodimer.

Its subcellular location is the cytoplasmic vesicle. It is found in the secretory vesicle. The protein localises to the chromaffin granule. It localises to the secreted. Serine protease inhibitor. This is Serpin A3-5 from Bos taurus (Bovine).